We begin with the raw amino-acid sequence, 201 residues long: Recombination protein RecR (201 aa).

The C4-type zinc-finger motif lies at Cys60–Cys75. In terms of domain architecture, Toprim spans Ala83–Pro178.

This sequence belongs to the RecR family.

May play a role in DNA repair. It seems to be involved in an RecBC-independent recombinational process of DNA repair. It may act with RecF and RecO. This is Recombination protein RecR from Bartonella henselae (strain ATCC 49882 / DSM 28221 / CCUG 30454 / Houston 1) (Rochalimaea henselae).